We begin with the raw amino-acid sequence, 404 residues long: Phospho-N-acetylmuramoyl-pentapeptide-transferase (404 aa).

The next 10 membrane-spanning stretches (helical) occupy residues 30–50 (SAAILSLCISIFLGKRLIIFF), 73–93 (IPTMGGIIIIAATVVPTLLFA), 100–120 (IMLLLISIIWMGLIGFIDDYI), 132–152 (GKFKIVGQVALGVIVGITLIF), 209–229 (YMWIVYVLFMIFIIAAVSNGA), 242–262 (TSAIIGTTLAILAYVSGNVIF), 274–294 (LAELAIFCTAFVGACVGFLWY), 301–321 (IFMGDTGSLAIGSVIAVLAIV), 326–346 (LMIPLLCGIFFIETLSVIIQV), and 381–401 (KIVTRFWIVGIVLAILSLVTL).

This sequence belongs to the glycosyltransferase 4 family. MraY subfamily. Mg(2+) serves as cofactor.

Its subcellular location is the cell inner membrane. It carries out the reaction UDP-N-acetyl-alpha-D-muramoyl-L-alanyl-gamma-D-glutamyl-meso-2,6-diaminopimeloyl-D-alanyl-D-alanine + di-trans,octa-cis-undecaprenyl phosphate = di-trans,octa-cis-undecaprenyl diphospho-N-acetyl-alpha-D-muramoyl-L-alanyl-D-glutamyl-meso-2,6-diaminopimeloyl-D-alanyl-D-alanine + UMP. Its pathway is cell wall biogenesis; peptidoglycan biosynthesis. Catalyzes the initial step of the lipid cycle reactions in the biosynthesis of the cell wall peptidoglycan: transfers peptidoglycan precursor phospho-MurNAc-pentapeptide from UDP-MurNAc-pentapeptide onto the lipid carrier undecaprenyl phosphate, yielding undecaprenyl-pyrophosphoryl-MurNAc-pentapeptide, known as lipid I. The polypeptide is Phospho-N-acetylmuramoyl-pentapeptide-transferase (Amoebophilus asiaticus (strain 5a2)).